The chain runs to 79 residues: Sulfur carrier protein TusA (79 aa).

The active-site Cysteine persulfide intermediate is the Cys-15.

The protein belongs to the sulfur carrier protein TusA family. Interacts with IscS.

Its subcellular location is the cytoplasm. It functions in the pathway tRNA modification. In terms of biological role, sulfur carrier protein involved in sulfur trafficking in the cell. Part of a sulfur-relay system required for 2-thiolation during synthesis of 2-thiouridine of the modified wobble base 5-methylaminomethyl-2-thiouridine (mnm(5)s(2)U) in tRNA. Interacts with IscS and stimulates its cysteine desulfurase activity. Accepts an activated sulfur from IscS, which is then transferred to TusD, and thus determines the direction of sulfur flow from IscS to 2-thiouridine formation. Also appears to be involved in sulfur transfer for the biosynthesis of molybdopterin. The protein is Sulfur carrier protein TusA of Buchnera aphidicola subsp. Baizongia pistaciae (strain Bp).